We begin with the raw amino-acid sequence, 361 residues long: 3-dehydroquinate synthase (361 aa).

Residues 72-77, 130-131, Lys142, and Lys151 contribute to the NAD(+) site; these read SGEKEK and TT. Residues Glu184, His247, and His264 each coordinate Zn(2+).

It belongs to the sugar phosphate cyclases superfamily. Dehydroquinate synthase family. Co(2+) is required as a cofactor. Requires Zn(2+) as cofactor. The cofactor is NAD(+).

It localises to the cytoplasm. The catalysed reaction is 7-phospho-2-dehydro-3-deoxy-D-arabino-heptonate = 3-dehydroquinate + phosphate. It participates in metabolic intermediate biosynthesis; chorismate biosynthesis; chorismate from D-erythrose 4-phosphate and phosphoenolpyruvate: step 2/7. Catalyzes the conversion of 3-deoxy-D-arabino-heptulosonate 7-phosphate (DAHP) to dehydroquinate (DHQ). The sequence is that of 3-dehydroquinate synthase from Bacillus cereus (strain ATCC 10987 / NRS 248).